Here is a 439-residue protein sequence, read N- to C-terminus: Serine--tRNA ligase (439 aa).

247–249 (TSE) lines the L-serine pocket. 278 to 280 (RSE) serves as a coordination point for ATP. L-serine is bound at residue Glu-301. 365–368 (EISS) is a binding site for ATP. Ser-400 is a binding site for L-serine.

Belongs to the class-II aminoacyl-tRNA synthetase family. Type-1 seryl-tRNA synthetase subfamily. Homodimer. The tRNA molecule binds across the dimer.

It is found in the cytoplasm. The catalysed reaction is tRNA(Ser) + L-serine + ATP = L-seryl-tRNA(Ser) + AMP + diphosphate + H(+). It carries out the reaction tRNA(Sec) + L-serine + ATP = L-seryl-tRNA(Sec) + AMP + diphosphate + H(+). The protein operates within aminoacyl-tRNA biosynthesis; selenocysteinyl-tRNA(Sec) biosynthesis; L-seryl-tRNA(Sec) from L-serine and tRNA(Sec): step 1/1. Its function is as follows. Catalyzes the attachment of serine to tRNA(Ser). Is also able to aminoacylate tRNA(Sec) with serine, to form the misacylated tRNA L-seryl-tRNA(Sec), which will be further converted into selenocysteinyl-tRNA(Sec). The chain is Serine--tRNA ligase from Paracidovorax citrulli (strain AAC00-1) (Acidovorax citrulli).